The primary structure comprises 295 residues: uncharacterized protein (295 aa).

Residues 4 to 233 (IVVKSMAMEK…LQNTIERLVL (230 aa)) enclose the Sigma-54 factor interaction domain.

This is an uncharacterized protein from Pseudomonas sp. (strain NS671).